Consider the following 337-residue polypeptide: GTPase Obg (337 aa).

In terms of domain architecture, Obg spans 1–158; sequence MFVDRVIIEL…HHIELELKLI (158 aa). The region spanning 159 to 330 is the OBG-type G domain; it reads ADVGLVGFPN…LIEKMTQRLS (172 aa). GTP-binding positions include 165 to 172, 190 to 194, 212 to 215, 282 to 285, and 311 to 313; these read GFPNAGKS, FTTLQ, DIPG, NKID, and SAV. Mg(2+) is bound by residues Ser-172 and Thr-192.

This sequence belongs to the TRAFAC class OBG-HflX-like GTPase superfamily. OBG GTPase family. In terms of assembly, monomer. Mg(2+) serves as cofactor.

It is found in the cytoplasm. In terms of biological role, an essential GTPase which binds GTP, GDP and possibly (p)ppGpp with moderate affinity, with high nucleotide exchange rates and a fairly low GTP hydrolysis rate. Plays a role in control of the cell cycle, stress response, ribosome biogenesis and in those bacteria that undergo differentiation, in morphogenesis control. The chain is GTPase Obg from Protochlamydia amoebophila (strain UWE25).